The chain runs to 345 residues: Uroporphyrinogen decarboxylase (345 aa).

Substrate contacts are provided by residues 27–31 (RQAGR), Phe-46, Asp-76, Tyr-152, Ser-207, and His-320.

The protein belongs to the uroporphyrinogen decarboxylase family. In terms of assembly, homodimer.

The protein localises to the cytoplasm. It catalyses the reaction uroporphyrinogen III + 4 H(+) = coproporphyrinogen III + 4 CO2. Its pathway is porphyrin-containing compound metabolism; protoporphyrin-IX biosynthesis; coproporphyrinogen-III from 5-aminolevulinate: step 4/4. Functionally, catalyzes the decarboxylation of four acetate groups of uroporphyrinogen-III to yield coproporphyrinogen-III. The polypeptide is Uroporphyrinogen decarboxylase (Oceanobacillus iheyensis (strain DSM 14371 / CIP 107618 / JCM 11309 / KCTC 3954 / HTE831)).